The primary structure comprises 200 residues: Nucleoside triphosphate pyrophosphatase (200 aa).

Asp-79 (proton acceptor) is an active-site residue.

This sequence belongs to the Maf family. It depends on a divalent metal cation as a cofactor.

Its subcellular location is the cytoplasm. The enzyme catalyses a ribonucleoside 5'-triphosphate + H2O = a ribonucleoside 5'-phosphate + diphosphate + H(+). The catalysed reaction is a 2'-deoxyribonucleoside 5'-triphosphate + H2O = a 2'-deoxyribonucleoside 5'-phosphate + diphosphate + H(+). Its function is as follows. Nucleoside triphosphate pyrophosphatase. May have a dual role in cell division arrest and in preventing the incorporation of modified nucleotides into cellular nucleic acids. The chain is Nucleoside triphosphate pyrophosphatase from Legionella pneumophila subsp. pneumophila (strain Philadelphia 1 / ATCC 33152 / DSM 7513).